The primary structure comprises 228 residues: 2-C-methyl-D-erythritol 4-phosphate cytidylyltransferase (228 aa).

This sequence belongs to the IspD/TarI cytidylyltransferase family. IspD subfamily.

It carries out the reaction 2-C-methyl-D-erythritol 4-phosphate + CTP + H(+) = 4-CDP-2-C-methyl-D-erythritol + diphosphate. Its pathway is isoprenoid biosynthesis; isopentenyl diphosphate biosynthesis via DXP pathway; isopentenyl diphosphate from 1-deoxy-D-xylulose 5-phosphate: step 2/6. Catalyzes the formation of 4-diphosphocytidyl-2-C-methyl-D-erythritol from CTP and 2-C-methyl-D-erythritol 4-phosphate (MEP). In Nostoc sp. (strain PCC 7120 / SAG 25.82 / UTEX 2576), this protein is 2-C-methyl-D-erythritol 4-phosphate cytidylyltransferase.